Consider the following 95-residue polypeptide: Ferredoxin-4 (95 aa).

In terms of domain architecture, 2Fe-2S ferredoxin-type spans 2-95 (DKATLTFTDV…LGGAVKVRPA (94 aa)). [2Fe-2S] cluster-binding residues include C38, C43, C46, and C81.

This sequence belongs to the 2Fe2S plant-type ferredoxin family. It depends on [2Fe-2S] cluster as a cofactor.

Ferredoxins are iron-sulfur proteins that transfer electrons in a wide variety of metabolic reactions. This ferredoxin is required for nitrogen fixation. The chain is Ferredoxin-4 (fdxC) from Rhodobacter capsulatus (Rhodopseudomonas capsulata).